A 234-amino-acid polypeptide reads, in one-letter code: Purine nucleoside phosphorylase DeoD-type (234 aa).

Histidine 4 is an a purine D-ribonucleoside binding site. Phosphate-binding positions include glycine 20, arginine 24, arginine 43, and arginine 87–threonine 90. A purine D-ribonucleoside-binding positions include glutamate 179–glutamate 181 and serine 203–aspartate 204. Aspartate 204 acts as the Proton donor in catalysis.

It belongs to the PNP/UDP phosphorylase family. As to quaternary structure, homohexamer; trimer of homodimers.

It catalyses the reaction a purine D-ribonucleoside + phosphate = a purine nucleobase + alpha-D-ribose 1-phosphate. The enzyme catalyses a purine 2'-deoxy-D-ribonucleoside + phosphate = a purine nucleobase + 2-deoxy-alpha-D-ribose 1-phosphate. Catalyzes the reversible phosphorolytic breakdown of the N-glycosidic bond in the beta-(deoxy)ribonucleoside molecules, with the formation of the corresponding free purine bases and pentose-1-phosphate. This Helicobacter pylori (strain Shi470) protein is Purine nucleoside phosphorylase DeoD-type.